A 62-amino-acid polypeptide reads, in one-letter code: Photosystem II reaction center protein Z (62 aa).

2 helical membrane passes run 8-28 and 41-61; these read SVFA…VVLA and FSGA…NSLI.

It belongs to the PsbZ family. As to quaternary structure, PSII is composed of 1 copy each of membrane proteins PsbA, PsbB, PsbC, PsbD, PsbE, PsbF, PsbH, PsbI, PsbJ, PsbK, PsbL, PsbM, PsbT, PsbY, PsbZ, Psb30/Ycf12, at least 3 peripheral proteins of the oxygen-evolving complex and a large number of cofactors. It forms dimeric complexes.

It localises to the plastid. Its subcellular location is the chloroplast thylakoid membrane. May control the interaction of photosystem II (PSII) cores with the light-harvesting antenna, regulates electron flow through the 2 photosystem reaction centers. PSII is a light-driven water plastoquinone oxidoreductase, using light energy to abstract electrons from H(2)O, generating a proton gradient subsequently used for ATP formation. The polypeptide is Photosystem II reaction center protein Z (Psilotum nudum (Whisk fern)).